The primary structure comprises 438 residues: Alkylcitrate synthase tstJ (438 aa).

Catalysis depends on residues His-309 and Asp-365.

The protein belongs to the citrate synthase family.

The catalysed reaction is (2E,10E)-dode-2,10-dicenoyl-CoA + oxaloacetate + H2O = (4E,11E)-2-hydroxytrideca-4,11-dien-1,2,3-tricarboxylate + CoA + H(+). It functions in the pathway secondary metabolite biosynthesis. In terms of biological role, alkylcitrate synthase; part of the gene cluster that mediates the biosynthesis of the antihypercholesterolemic agents phomoidrides which are dimeric anhydrides. Within the pathway, the alkylcitrate synthase (ACS) tstJ and the alkylcitrate dehydratase (ACDH) tstI produce the decarboxylated monomeric anhydrides by coupling the C12-fatty acyl product from phiA with oxalacetic acid. The pathway begins with the highly reducing polyketide synthase tstA that catalyzes the formation of a C12-fatty acyl-ACP, starting from one acetate and 5 malonate units. The hydrolase tstM is involved in the release of the C12-fatty acyl chain from phiA. The alkylcitrate synthase (ACS) tstJ and the alkylcitrate dehydratase (ACDH) tstI then give rise to decarboxylated monomeric anhydrides by coupling the C12-fatty acyl chain with oxalacetic acid. The cyclase tstC is responsible for the dimerization of the monomeric anhydrides which leads to the production of prephomoidride that contains the characteristic bicyclo[4.3.1]deca-1,6-diene system of phomoidrides. Iterative oxidation catalyzed by the alpha-ketoglutarate-dependent dioxygenase tstK produced then phomoidride A. Finally, the methyltransferase tstE converts phomoidride A to phomoidride B via an acetalization reaction. The phosphatidylethanolamine-binding protein tstB and tstN are not essential for dimerization and their functions have still to be determined. The protein is Alkylcitrate synthase tstJ of Talaromyces stipitatus (strain ATCC 10500 / CBS 375.48 / QM 6759 / NRRL 1006) (Penicillium stipitatum).